The chain runs to 532 residues: Vesicular acetylcholine transporter unc-17 (532 aa).

The Cytoplasmic portion of the chain corresponds to 1–31 (MGFNVPVINRDSEILKADAKKWLEQQDNQKK). A helical transmembrane segment spans residues 32-52 (CVLVIVSIALLLDNMLYMVIV). The Lumenal, vesicle portion of the chain corresponds to 53-101 (PIIPKYLRDIHNYQVTFEGYHNETSQLANGTYLVREVGGRINFLDEELE). N-linked (GlcNAc...) asparagine glycans are attached at residues Asn74 and Asn81. Residues 102–121 (LGWLFASKALLQIFVNPFSG) form a helical membrane-spanning segment. At 122–130 (YIIDRVGYE) the chain is on the cytoplasmic side. The helical transmembrane segment at 131–151 (IPMILGLCTMFFSTAIFALGK) threads the bilayer. The Lumenal, vesicle portion of the chain corresponds to 152–160 (SYGVLLFAR). The chain crosses the membrane as a helical span at residues 161-180 (SLQGFGSAFADTSGLAMIAD). Over 181 to 191 (RFTEENERSAA) the chain is Cytoplasmic. Residues 192 to 213 (LGIALAFISFGCLVAPPFGSVL) traverse the membrane as a helical segment. At 214–219 (YSLAGK) the chain is on the lumenal, vesicle side. The chain crosses the membrane as a helical span at residues 220–242 (PVPFLILSFVCLADAIAVFMVIN). Topologically, residues 243–266 (PHRRGTDSHGEKVQGTPMWRLFMD) are cytoplasmic. The helical transmembrane segment at 267–286 (PFIACCSGALIMANVSLAFL) threads the bilayer. Residues 287-303 (EPTITTWMSEMMPDTPG) are Lumenal, vesicle-facing. The chain crosses the membrane as a helical span at residues 304–328 (WLVGVIWLPPFFPHVLGVYVTVKML). Topologically, residues 329-335 (RAFPHHT) are cytoplasmic. A helical transmembrane segment spans residues 336-356 (WAIAMVGLAMEGIACFAIPYT). Residues 357 to 367 (TSVMQLVIPLS) are Lumenal, vesicle-facing. The chain crosses the membrane as a helical span at residues 368–388 (FVCFGIALIDTSLLPMLGHLV). Topologically, residues 389-393 (DTRHV) are cytoplasmic. A helical transmembrane segment spans residues 394–412 (SVYGSVYAIADISYSLAYA). The Lumenal, vesicle segment spans residues 413 to 418 (FGPIIA). Residues 419-440 (GWIVTNWGFTALNIIIFATNVT) form a helical membrane-spanning segment. The Cytoplasmic portion of the chain corresponds to 441-532 (YAPVLFLLRK…AGYDPLNPQW (92 aa)).

Belongs to the major facilitator superfamily. Vesicular transporter family. In terms of tissue distribution, detected in most regions of the nervous system including the nerve ring, the ventral and dorsal nerve cords, and the pharyngeal nervous system. Expressed in most cholinergic neurons. In addition, expressed in SIA, SIB and SMB sublateral motor neurons.

The protein localises to the cytoplasmic vesicle. It localises to the secretory vesicle. Its subcellular location is the synaptic vesicle membrane. Its function is as follows. Involved in acetylcholine transport into synaptic vesicles. The polypeptide is Vesicular acetylcholine transporter unc-17 (Caenorhabditis elegans).